Reading from the N-terminus, the 105-residue chain is Guanyl-specific ribonuclease U1 (105 aa).

Position 1 is a pyrrolidone carboxylic acid (Gln-1). 2 disulfide bridges follow: Cys-8/Cys-103 and Cys-51/Cys-87. The active site involves His-37. Glu-57 (proton acceptor) is an active-site residue. His-92 (proton donor) is an active-site residue.

This sequence belongs to the ribonuclease N1/T1 family.

The catalysed reaction is [RNA] containing guanosine + H2O = an [RNA fragment]-3'-guanosine-3'-phosphate + a 5'-hydroxy-ribonucleotide-3'-[RNA fragment].. The chain is Guanyl-specific ribonuclease U1 from Ustilago sphaerogena (Smut fungus).